We begin with the raw amino-acid sequence, 78 residues long: Acyl carrier protein (78 aa).

Residues 2–77 (SDIAERVKKI…DAVKFIEKAQ (76 aa)) form the Carrier domain. Ser-37 is subject to O-(pantetheine 4'-phosphoryl)serine.

The protein belongs to the acyl carrier protein (ACP) family. 4'-phosphopantetheine is transferred from CoA to a specific serine of apo-ACP by AcpS. This modification is essential for activity because fatty acids are bound in thioester linkage to the sulfhydryl of the prosthetic group.

The protein resides in the cytoplasm. The protein operates within lipid metabolism; fatty acid biosynthesis. In terms of biological role, carrier of the growing fatty acid chain in fatty acid biosynthesis. This is Acyl carrier protein from Sinorhizobium fredii (strain NBRC 101917 / NGR234).